We begin with the raw amino-acid sequence, 796 residues long: Nuclear GTPase SLIP-GC (796 aa).

107 to 114 (GITGAGKS) provides a ligand contact to GTP. Coiled-coil stretches lie at residues 158–185 (SDQE…EEAD) and 742–776 (GLCK…LRRS).

It is found in the nucleus speckle. Nuclear GTPase found in germinal center B-cells, where it may inhibit function of the activation-induced cytidine deaminase AICDA. Reduces somatic hypermutation in B-cells which may enhance genome stability. The polypeptide is Nuclear GTPase SLIP-GC (Mus musculus (Mouse)).